We begin with the raw amino-acid sequence, 516 residues long: Probable D,D-dipeptide-binding periplasmic protein DdpA (516 aa).

The N-terminal stretch at 1-25 (MKRSISFRPTLLALVLATNFPVAHA) is a signal peptide.

The protein belongs to the bacterial solute-binding protein 5 family. The complex is composed of two ATP-binding proteins (DdpD and DdpF), two transmembrane proteins (DdpB and DdpC) and a solute-binding protein (DdpA).

It localises to the periplasm. Part of the ABC transporter complex DdpABCDF, which is probably involved in D,D-dipeptide transport. The chain is Probable D,D-dipeptide-binding periplasmic protein DdpA (ddpA) from Escherichia coli (strain K12).